A 224-amino-acid polypeptide reads, in one-letter code: UPF0758 protein XF_0148 (224 aa).

Residues 102–224 (SIHDPISAGR…PVSFAEHGWL (123 aa)) enclose the MPN domain. Zn(2+) contacts are provided by H173, H175, and D186. The short motif at 173-186 (HNHPSGNREPSPAD) is the JAMM motif element.

It belongs to the UPF0758 family.

This chain is UPF0758 protein XF_0148, found in Xylella fastidiosa (strain 9a5c).